A 185-amino-acid polypeptide reads, in one-letter code: Ribosome-recycling factor (185 aa).

Belongs to the RRF family.

It is found in the cytoplasm. Functionally, responsible for the release of ribosomes from messenger RNA at the termination of protein biosynthesis. May increase the efficiency of translation by recycling ribosomes from one round of translation to another. This is Ribosome-recycling factor from Salmonella arizonae (strain ATCC BAA-731 / CDC346-86 / RSK2980).